Here is a 131-residue protein sequence, read N- to C-terminus: Capsid protein (131 aa).

Ca(2+) is bound by residues Gln-2 and Tyr-131.

It belongs to the Leviviricetes capsid protein family. Homodimer. The capsid proteins form dimers that assemble by group of 5. Twelve such pentamers are linked together with free dimers. The homodimers binds to the viral RNA via an operator hairpin, but also to many other RNA sequences in the viral genome; this interaction probably shifts the virus from the replicative to the assembly phase and ensures specific encapsidation of the viral genome.

Its subcellular location is the virion. Its function is as follows. Capsid protein self-assembles to form an icosahedral capsid with a T=3 symmetry, about 26 nm in diameter, and consisting of 89 capsid proteins dimers (178 capsid proteins). Involved in viral genome encapsidation through the interaction between a capsid protein dimer and the multiple packaging signals present in the RNA genome. The capsid also contains 1 copy of the A2 maturation protein. Acts as a translational repressor of viral replicase synthesis late in infection. This latter function is the result of capsid protein interaction with an RNA hairpin which contains the replicase ribosome-binding site. This is Capsid protein from Pseudomonas phage PRR1 (Bacteriophage PRR1).